Here is a 400-residue protein sequence, read N- to C-terminus: Putative C-type lectin domain family 20 member A (400 aa).

The signal sequence occupies residues 1 to 20; the sequence is MLPRALLLSFCAAALQLVSS. C-type lectin domains lie at 26 to 131 and 159 to 275; these read LVKE…FLCY and ISGQ…FFCF. Intrachain disulfides connect Cys-40-Cys-130, Cys-105-Cys-122, Cys-180-Cys-274, and Cys-248-Cys-266. The interval 287 to 346 is disordered; it reads ELPPLFHTSPTEMTEETTPRPGRAVASVGSGTDRRDTAAATEAQHLSSESKEKTSAQKSG.

The chain is Putative C-type lectin domain family 20 member A from Homo sapiens (Human).